Consider the following 185-residue polypeptide: MVNPIIKEAKEKMKKTLERIEDELRKMRTGKPSPAILEEIKVDYYGVPTPVNQLATISVSEERTLVIKPWDKSVLSLIEKAINASDLGLNPINDGNVIRLVFPSPTTEQREKWVKKAKEIVEEGKIAIRNIRRDILKKIKEDQKEGKIPEDDAKRLENEIQKLTDEFIENLDKVFEIKKEEIMEF.

Belongs to the RRF family.

It localises to the cytoplasm. In terms of biological role, responsible for the release of ribosomes from messenger RNA at the termination of protein biosynthesis. May increase the efficiency of translation by recycling ribosomes from one round of translation to another. This is Ribosome-recycling factor from Thermotoga petrophila (strain ATCC BAA-488 / DSM 13995 / JCM 10881 / RKU-1).